The following is a 745-amino-acid chain: 1,4-alpha-glucan branching enzyme GlgB (745 aa).

The active-site Nucleophile is D416. The active-site Proton donor is E469.

This sequence belongs to the glycosyl hydrolase 13 family. GlgB subfamily. In terms of assembly, monomer.

The enzyme catalyses Transfers a segment of a (1-&gt;4)-alpha-D-glucan chain to a primary hydroxy group in a similar glucan chain.. Its pathway is glycan biosynthesis; glycogen biosynthesis. In terms of biological role, catalyzes the formation of the alpha-1,6-glucosidic linkages in glycogen by scission of a 1,4-alpha-linked oligosaccharide from growing alpha-1,4-glucan chains and the subsequent attachment of the oligosaccharide to the alpha-1,6 position. The polypeptide is 1,4-alpha-glucan branching enzyme GlgB (Shewanella sp. (strain W3-18-1)).